The sequence spans 211 residues: Large ribosomal subunit protein uL3 (211 aa).

Gln-150 carries the N5-methylglutamine modification.

Belongs to the universal ribosomal protein uL3 family. In terms of assembly, part of the 50S ribosomal subunit. Forms a cluster with proteins L14 and L19. Post-translationally, methylated by PrmB.

In terms of biological role, one of the primary rRNA binding proteins, it binds directly near the 3'-end of the 23S rRNA, where it nucleates assembly of the 50S subunit. The sequence is that of Large ribosomal subunit protein uL3 from Pseudomonas aeruginosa (strain LESB58).